We begin with the raw amino-acid sequence, 350 residues long: 26S proteasome non-ATPase regulatory subunit 8 (350 aa).

A disordered region spans residues 1-24 (MFIKGRAPRAPPRERRRATRGGLR). Phosphoserine is present on serine 106. The 170-residue stretch at 162 to 331 (PSFERYMAQL…QQKPEDTTIP (170 aa)) folds into the PCI domain. Residue lysine 297 forms a Glycyl lysine isopeptide (Lys-Gly) (interchain with G-Cter in SUMO2) linkage.

Belongs to the proteasome subunit S14 family. As to quaternary structure, component of the 19S proteasome regulatory particle complex. The 26S proteasome consists of a 20S core particle (CP) and two 19S regulatory subunits (RP). The regulatory particle is made of a lid composed of 9 subunits including PSMD8, a base containing 6 ATPases and few additional components. Interacts with DDI2. Interacts with TASOR.

Its function is as follows. Component of the 26S proteasome, a multiprotein complex involved in the ATP-dependent degradation of ubiquitinated proteins. This complex plays a key role in the maintenance of protein homeostasis by removing misfolded or damaged proteins, which could impair cellular functions, and by removing proteins whose functions are no longer required. Therefore, the proteasome participates in numerous cellular processes, including cell cycle progression, apoptosis, or DNA damage repair. In Homo sapiens (Human), this protein is 26S proteasome non-ATPase regulatory subunit 8 (PSMD8).